A 154-amino-acid polypeptide reads, in one-letter code: Methylglyoxal synthase (154 aa).

The 149-residue stretch at glycine 6–leucine 154 folds into the MGS-like domain. Substrate-binding positions include histidine 19, lysine 23, threonine 45–threonine 48, and serine 65–glycine 66. Residue aspartate 71 is the Proton donor/acceptor of the active site. Histidine 98 is a substrate binding site.

It belongs to the methylglyoxal synthase family.

It carries out the reaction dihydroxyacetone phosphate = methylglyoxal + phosphate. In terms of biological role, catalyzes the formation of methylglyoxal from dihydroxyacetone phosphate. The protein is Methylglyoxal synthase of Saccharophagus degradans (strain 2-40 / ATCC 43961 / DSM 17024).